The chain runs to 640 residues: Acid beta-fructofuranosidase 2, vacuolar (640 aa).

A disordered region spans residues 1 to 22; sequence MDTNTTSYTPLPGDPFLSGPPE. Over 1–29 the chain is Cytoplasmic; that stretch reads MDTNTTSYTPLPGDPFLSGPPETPRRPLK. Positions 1-78 are cleaved as a propeptide — removed in mature form; sequence MDTNTTSYTP…HPQSTTNTML (78 aa). Residues 30–49 form a helical membrane-spanning segment; it reads GFAVIFASVIFLMSLVALII. Over 50-616 the chain is Lumenal; sequence HQGPQQPPDV…FSPDAASHSS (567 aa). Substrate contacts are provided by residues 93-96, Q112, W120, 155-156, 219-220, E274, and D307; these read WMND, WT, and RD. Residue D96 is part of the active site. A disulfide bridge connects residues C464 and C512. Residues 617 to 639 form a helical membrane-spanning segment; the sequence is FTPVTVFIKFIVPFGIFLTLYFV. Position 640 (R640) is a topological domain, cytoplasmic.

This sequence belongs to the glycosyl hydrolase 32 family. As to expression, expressed in buds, stems, roots and leaves.

The protein localises to the membrane. Its subcellular location is the vacuole membrane. The catalysed reaction is Hydrolysis of terminal non-reducing beta-D-fructofuranoside residues in beta-D-fructofuranosides.. Functionally, vacuolar invertase. The sequence is that of Acid beta-fructofuranosidase 2, vacuolar from Rosa hybrid cultivar.